Consider the following 131-residue polypeptide: mRNA stability protein IGO2 (131 aa).

Polar residues predominate over residues 1–13 (MSEDLSPTSSRVD). The segment at 1-26 (MSEDLSPTSSRVDLSNPHGFTKEGVD) is disordered. S2 is modified (N-acetylserine). Phosphoserine is present on residues S6, S63, S108, and S119. The tract at residues 81–131 (VNNSSNNLPVTNPSGLRESIIRRRMSSSSGGDSISRQGSISSGPPPRSPNK) is disordered. Residues 106-122 (SSSSGGDSISRQGSISS) show a composition bias toward low complexity.

The protein belongs to the endosulfine family. In terms of processing, phosphorylated by RIM15.

It localises to the cytoplasm. The protein localises to the nucleus. In terms of biological role, required for TORC1 to properly control gene expression and chronological life span. Plays an essential role in initiation of the G0 program by preventing the degradation of specific nutrient-regulated mRNAs via the 5'-3' mRNA decay pathway. In Saccharomyces cerevisiae (strain ATCC 204508 / S288c) (Baker's yeast), this protein is mRNA stability protein IGO2 (IGO2).